The following is a 258-amino-acid chain: Thiazole synthase (258 aa).

Lys100 acts as the Schiff-base intermediate with DXP in catalysis. 1-deoxy-D-xylulose 5-phosphate-binding positions include Gly161, 187 to 188, and 209 to 210; these read AG and NT.

The protein belongs to the ThiG family. In terms of assembly, homotetramer. Forms heterodimers with either ThiH or ThiS.

Its subcellular location is the cytoplasm. It catalyses the reaction [ThiS sulfur-carrier protein]-C-terminal-Gly-aminoethanethioate + 2-iminoacetate + 1-deoxy-D-xylulose 5-phosphate = [ThiS sulfur-carrier protein]-C-terminal Gly-Gly + 2-[(2R,5Z)-2-carboxy-4-methylthiazol-5(2H)-ylidene]ethyl phosphate + 2 H2O + H(+). It participates in cofactor biosynthesis; thiamine diphosphate biosynthesis. Catalyzes the rearrangement of 1-deoxy-D-xylulose 5-phosphate (DXP) to produce the thiazole phosphate moiety of thiamine. Sulfur is provided by the thiocarboxylate moiety of the carrier protein ThiS. In vitro, sulfur can be provided by H(2)S. The chain is Thiazole synthase from Campylobacter jejuni subsp. doylei (strain ATCC BAA-1458 / RM4099 / 269.97).